The primary structure comprises 358 residues: MSVRAAVVGLGWAGRELWLPLLREHADFEVVAAVDADPASRQAFTKATGIPTHAAVSALTAREVDLAVVAVPNYLHTEVAGALLATGISVFLEKPVCLNSAEIDVLAAAERSGGMLLAGSAARYRGDVGALRRLLPELGEIRHVALGWIRARGVPRAGGWFTQREKAGGGALYDLGWHLLDTLAFLLGPAAFTQVIGVTSDDFVNAGAWRAAWRQDQLGADAADVEDTARGFLVRDDGVSVSLRASWASHQARDVSVIHVEGSAGTADLRCTFGFSPNREPEPVLSVTREGTTTRLPVPLERIGVEYTRQVSDLAAMLADPGHRGRAVAEARPIVSMIENFYASAGSARGRGAVPAYQ.

As to quaternary structure, interacts with RifK.

The enzyme catalyses UDP-alpha-D-glucose + NAD(+) = UDP-3-oxo-alpha-D-glucose + NADH + H(+). The protein operates within antibiotic biosynthesis; rifamycin B biosynthesis. In a complex with RifK, RifL may catalyze the oxidation of UDP-glucose to UDP-3-keto-D-glucose, which would then be used by RifK to produce UDP-kanosamine. Is not able to use dTDP-glucose as substrate. This chain is Putative UDP-kanosamine synthase oxidoreductase subunit (rifL), found in Amycolatopsis mediterranei (strain S699) (Nocardia mediterranei).